Here is a 324-residue protein sequence, read N- to C-terminus: DNA-directed RNA polymerase subunit alpha (324 aa).

Residues 1–228 (MIEFQKPTIR…EHFNLFTDLS (228 aa)) form an alpha N-terminal domain (alpha-NTD) region. The tract at residues 245 to 324 (RNKLLDMTIE…STPKEEEEEK (80 aa)) is alpha C-terminal domain (alpha-CTD).

It belongs to the RNA polymerase alpha chain family. In terms of assembly, homodimer. The RNAP catalytic core consists of 2 alpha, 1 beta, 1 beta' and 1 omega subunit. When a sigma factor is associated with the core the holoenzyme is formed, which can initiate transcription.

It carries out the reaction RNA(n) + a ribonucleoside 5'-triphosphate = RNA(n+1) + diphosphate. Functionally, DNA-dependent RNA polymerase catalyzes the transcription of DNA into RNA using the four ribonucleoside triphosphates as substrates. The chain is DNA-directed RNA polymerase subunit alpha from Caldicellulosiruptor bescii (strain ATCC BAA-1888 / DSM 6725 / KCTC 15123 / Z-1320) (Anaerocellum thermophilum).